Here is a 338-residue protein sequence, read N- to C-terminus: Anthranilate phosphoribosyltransferase (338 aa).

5-phospho-alpha-D-ribose 1-diphosphate is bound by residues glycine 81, 84–85 (GD), threonine 89, 91–94 (NIST), 109–117 (KHGNRGVSS), and serine 121. Glycine 81 lines the anthranilate pocket. A Mg(2+)-binding site is contributed by serine 93. Asparagine 112 lines the anthranilate pocket. Arginine 167 contributes to the anthranilate binding site. Positions 225 and 226 each coordinate Mg(2+).

It belongs to the anthranilate phosphoribosyltransferase family. As to quaternary structure, homodimer. It depends on Mg(2+) as a cofactor.

It carries out the reaction N-(5-phospho-beta-D-ribosyl)anthranilate + diphosphate = 5-phospho-alpha-D-ribose 1-diphosphate + anthranilate. It participates in amino-acid biosynthesis; L-tryptophan biosynthesis; L-tryptophan from chorismate: step 2/5. Catalyzes the transfer of the phosphoribosyl group of 5-phosphorylribose-1-pyrophosphate (PRPP) to anthranilate to yield N-(5'-phosphoribosyl)-anthranilate (PRA). The polypeptide is Anthranilate phosphoribosyltransferase (Methanoculleus marisnigri (strain ATCC 35101 / DSM 1498 / JR1)).